We begin with the raw amino-acid sequence, 387 residues long: ATP phosphoribosyltransferase regulatory subunit (387 aa).

The protein belongs to the class-II aminoacyl-tRNA synthetase family. HisZ subfamily. As to quaternary structure, heteromultimer composed of HisG and HisZ subunits.

The protein localises to the cytoplasm. The protein operates within amino-acid biosynthesis; L-histidine biosynthesis; L-histidine from 5-phospho-alpha-D-ribose 1-diphosphate: step 1/9. In terms of biological role, required for the first step of histidine biosynthesis. May allow the feedback regulation of ATP phosphoribosyltransferase activity by histidine. The protein is ATP phosphoribosyltransferase regulatory subunit of Polynucleobacter asymbioticus (strain DSM 18221 / CIP 109841 / QLW-P1DMWA-1) (Polynucleobacter necessarius subsp. asymbioticus).